The sequence spans 576 residues: Putative diflavin flavoprotein A 1 (576 aa).

The segment at 48 to 240 is zinc metallo-hydrolase; sequence RNGTTYNSFL…LAIKTVATGH (193 aa). Positions 97, 99, 101, 164, 183, and 240 each coordinate Fe cation. In terms of domain architecture, Flavodoxin-like spans 269-431; the sequence is VALFYAEDYG…DLEKALGRIS (163 aa). The interval 432–576 is flavodoxin-reductase-like; it reads TGLYIITTKK…VHHRKVGNHY (145 aa).

In the N-terminal section; belongs to the zinc metallo-hydrolase group 3 family. It in the C-terminal section; belongs to the flavodoxin reductase family. The cofactor is Fe cation.

In terms of biological role, mediates electron transfer from NADH to oxygen, reducing it to water. This modular protein has 3 redox cofactors, in other organisms the same activity requires 2 or 3 proteins. The polypeptide is Putative diflavin flavoprotein A 1 (dfa1) (Nostoc sp. (strain PCC 7120 / SAG 25.82 / UTEX 2576)).